Reading from the N-terminus, the 204-residue chain is Pyridoxamine 5'-phosphate oxidase YLR456W homolog (204 aa).

FMN is bound by residues Phe65 to Thr66 and Asn127.

It belongs to the pyridoxamine 5'-phosphate oxidase family. FMN is required as a cofactor.

Its subcellular location is the cytoplasm. The protein resides in the nucleus. In Saccharomyces cerevisiae (strain ATCC 204508 / S288c) (Baker's yeast), this protein is Pyridoxamine 5'-phosphate oxidase YLR456W homolog.